Reading from the N-terminus, the 133-residue chain is Glutaredoxin-C4, chloroplastic (133 aa).

Residues 1–13 (MGMAQSSSSSSRP) are compositionally biased toward low complexity. Residues 1-25 (MGMAQSSSSSSRPSDSEQLEEPSKP) form a disordered region. Residues 1–27 (MGMAQSSSSSSRPSDSEQLEEPSKPVM) constitute a chloroplast transit peptide. The 101-residue stretch at 29 to 129 (LDKAKEIVAS…PLLTEAGAIA (101 aa)) folds into the Glutaredoxin domain. Residues Cys49 and Cys52 are joined by a disulfide bond.

This sequence belongs to the glutaredoxin family. CPYC subfamily.

The protein resides in the plastid. It localises to the chloroplast. In terms of biological role, has a glutathione-disulfide oxidoreductase activity in the presence of NADPH and glutathione reductase. Reduces low molecular weight disulfides and proteins. The polypeptide is Glutaredoxin-C4, chloroplastic (GRXC4) (Oryza sativa subsp. japonica (Rice)).